We begin with the raw amino-acid sequence, 39 residues long: Pro-opiomelanocortin (39 aa).

M13 carries the methionine amide modification.

The protein belongs to the POMC family.

It is found in the secreted. In terms of biological role, precursor protein for pituitary hormones that regulate stress and environmental adaptation. Its function is as follows. Stimulates the adrenal glands to release cortisol. Functionally, anorexigenic peptide. Increases the pigmentation of skin by increasing melanin production in melanocytes. In Squalus acanthias (Spiny dogfish), this protein is Pro-opiomelanocortin (pomc).